The chain runs to 388 residues: MEALLSSTTLQLKPLHPPSSFSSLHSPFSSISVLRVKGSKKAETFIQRSNFSTVLPLRVSASSQAAAAETSTSISIPSEMKAWSYTDYGSVDVLKLESNVAVPDIKEDQVLIKIVAAALNPVDFKRRLGKFKATDSPLPTVPGYDVAGVVVKVGSQVKGLKEGDEVYGDIHEKALDGPKQFGSLAEYTAVEEKLVALKPKNLSFAEAAALPLAIETAYEGLEKAGFSSGKSILVLGGAGGVGSLVIQLAKHVFGASKVAATSSTGKLELLKSLGADLAIDYTKENFEDLPDKFDVVYDSVGQGEKAVKVVKEGGSVVVLTGAVTPPGFRFVVTSNGEMLKKLNPYLESGKVKPVIDPKGPFSFDKVVDAFSYLETGRATGKVVIHPIP.

The N-terminal 60 residues, 1–60 (MEALLSSTTLQLKPLHPPSSFSSLHSPFSSISVLRVKGSKKAETFIQRSNFSTVLPLRVS), are a transit peptide targeting the chloroplast. NADP(+)-binding positions include Lys-125, 240–241 (GV), 263–266 (STGK), Tyr-281, 330–332 (FVV), and 377–378 (RA). Lys-125 contacts substrate.

This sequence belongs to the zinc-containing alcohol dehydrogenase family. Quinone oxidoreductase subfamily. As to quaternary structure, monomer.

It is found in the plastid. The protein localises to the chloroplast. The catalysed reaction is 4-hydroxy-2,5-dimethyl-furan-3(2H)-one + NADP(+) = 4-hydroxy-5-methyl-2-methylenefuran-3(2H)-one + NADPH + H(+). Its function is as follows. Enone oxidoreductase involved in the biosynthesis of 4-hydroxy-2,5-dimethyl-3(2H)-furanone (HDMF or furaneol). Can use both NADH and NADPH as the electron donor. The protein is 2-methylene-furan-3-one reductase (EO) of Solanum lycopersicum (Tomato).